Consider the following 368-residue polypeptide: Glycine betaine monooxygenase reductase subunit (368 aa).

An FAD-binding FR-type domain is found at 16 to 119 (NGRHNVRCVK…HGPVGDFNVI (104 aa)). One can recognise a 2Fe-2S ferredoxin-type domain in the interval 284–368 (LQVEFSNSGK…TPKSHVAIEF (85 aa)). The [2Fe-2S] cluster site is built by Cys318, Cys323, Cys326, and Cys356.

In the N-terminal section; belongs to the FAD-binding oxidoreductase type 6 family. In terms of assembly, monomer. The system is composed of an oxygenase subunit (BmoA) and a reductase subunit (BmoB). Maximal specific activity is obtained when the ratio of BmoA to BmoB is 5:1. Requires FAD as cofactor. The cofactor is [2Fe-2S] cluster.

It carries out the reaction glycine betaine + NADH + O2 + H(+) = N,N-dimethylglycine + formaldehyde + NAD(+) + H2O. Its function is as follows. Involved in degradation of glycine betaine. Part of a Rieske-type oxygenase system that catalyzes the conversion of glycine betaine (GB) to dimethylglycine (DMG). This subunit is the ferredoxin reductase component of the system. NADH is the preferred electron donor. This is Glycine betaine monooxygenase reductase subunit from Chromohalobacter salexigens (strain ATCC BAA-138 / DSM 3043 / CIP 106854 / NCIMB 13768 / 1H11).